The chain runs to 382 residues: Probable G-protein coupled receptor 132 (382 aa).

Residues 1–42 are Extracellular-facing; that stretch reads MRSEPTNAAGNTTLGVTSVLQSTSVPSSETCHVSYEESRVVL. A glycan (N-linked (GlcNAc...) asparagine) is linked at Asn11. A helical membrane pass occupies residues 43–65; that stretch reads VVVYSAVCLLGLPANCLTAWLTL. Residues 66-76 are Cytoplasmic-facing; sequence LQVLQRNVLAV. The chain crosses the membrane as a helical span at residues 77-99; that stretch reads YLFCLSLCELLYISTVPLWIIYI. At 100 to 113 the chain is on the extracellular side; sequence QNQHKWNLGPQACK. Cys112 and Cys184 form a disulfide bridge. Residues 114–135 traverse the membrane as a helical segment; sequence VTAYIFFCNIYISILLLCCISC. At 136-155 the chain is on the cytoplasmic side; it reads DRYMAVVYALESRGHRHQRT. The chain crosses the membrane as a helical span at residues 156-175; the sequence is AVTISACVILLVGLVNYPVF. The Extracellular segment spans residues 176–198; the sequence is DMKVEKSFCFEPLRMNSKIAGYH. The helical transmembrane segment at 199 to 221 threads the bilayer; sequence YLRFTFGFAIPLGILAFTNHQIF. Residues 222–241 are Cytoplasmic-facing; that stretch reads RSIKLSDSLSAAQKNKVKRS. A helical membrane pass occupies residues 242 to 261; the sequence is AIAVVTIFLVCFAPYHVVLL. Residues 262–286 are Extracellular-facing; sequence VKAASFSFYQGDMDAVCAFESRLYT. A helical membrane pass occupies residues 287–309; that stretch reads VSMVFLCLSTVNSVADPIIYVLG. The Cytoplasmic portion of the chain corresponds to 310-382; the sequence is TDHSRQEVSR…SPERLPEELC (73 aa).

This sequence belongs to the G-protein coupled receptor 1 family. In terms of tissue distribution, highly expressed in hematopoietic tissues rich in lymphocytes like spleen and thymus. Weakly expressed in heart and lung. Highly expressed in infiltrating macrophages within atherosclerotic lesions.

The protein resides in the cell membrane. Functionally, may be a receptor for oxidized free fatty acids derived from linoleic and arachidonic acids such as 9-hydroxyoctadecadienoic acid (9-HODE). Activates a G alpha protein, most likely G alpha(q). May be involved in apoptosis. Functions at the G2/M checkpoint to delay mitosis. May function as a sensor that monitors the oxidative states and mediates appropriate cellular responses such as secretion of paracrine signals and attenuation of proliferation. May mediate ths accumulation of intracellular inositol phosphates at acidic pH through proton-sensing activity. This is Probable G-protein coupled receptor 132 (Gpr132) from Mus musculus (Mouse).